A 236-amino-acid polypeptide reads, in one-letter code: tRNA1(Val) (adenine(37)-N6)-methyltransferase (236 aa).

Belongs to the methyltransferase superfamily. tRNA (adenine-N(6)-)-methyltransferase family.

The protein localises to the cytoplasm. It carries out the reaction adenosine(37) in tRNA1(Val) + S-adenosyl-L-methionine = N(6)-methyladenosine(37) in tRNA1(Val) + S-adenosyl-L-homocysteine + H(+). Specifically methylates the adenine in position 37 of tRNA(1)(Val) (anticodon cmo5UAC). This chain is tRNA1(Val) (adenine(37)-N6)-methyltransferase, found in Histophilus somni (strain 129Pt) (Haemophilus somnus).